The primary structure comprises 382 residues: Serine/threonine-protein kinase US3 homolog (382 aa).

Positions 1–10 are enriched in basic and acidic residues; it reads MENKQCDHLT. Residues 1–75 form a disordered region; that stretch reads MENKQCDHLT…ASESDEDDDD (75 aa). The segment covering 12–24 has biased composition (polar residues); that stretch reads WFSTTSDASESMD. Residues 45-75 are compositionally biased toward acidic residues; it reads ADEDLYSDISEGDLEYSDCDSASESDEDDDD. The region spanning 93-379 is the Protein kinase domain; the sequence is YTVIKTLTPG…AEELLSYPMF (287 aa). ATP-binding positions include 99–107 and Lys122; that span reads LTPGSEGRV. Asp207 acts as the Proton acceptor in catalysis.

It belongs to the protein kinase superfamily. Ser/Thr protein kinase family. Phosphorylated by protein 49; this phosphorylation regulates subsequent phosphorylation of proteins 26 and 29 by US3 homolog. Autophosphorylated.

The protein localises to the host cytoplasm. Its subcellular location is the host nucleus. The enzyme catalyses L-seryl-[protein] + ATP = O-phospho-L-seryl-[protein] + ADP + H(+). It catalyses the reaction L-threonyl-[protein] + ATP = O-phospho-L-threonyl-[protein] + ADP + H(+). In terms of biological role, multifunctional serine/threonine kinase that plays a role in several processes including egress of virus particles from the nucleus, modulation of the actin cytoskeleton and inhibition of apoptosis. Phosphorylates protein 26 and 29, two critical regulators of capsid budding from nucleus to endoplasmic reticulum, thereby facilitating virion egress. Modulates and redistributes host components of the nuclear envelope, including LMNA, emerin/EMD and the nuclear matrix protein MATR3. Phosphorylates envelope glycoprotein B (gB), probably to direct it to the cell surface. Promotes virus intracellular spread by restructuring host cell cytoskeleton. Blocks host apoptosis to extend cell survival and allow efficient viral replication. Promotes viral gene expression by phosphorylating host HDAC2 to reduce viral genome silencing. The polypeptide is Serine/threonine-protein kinase US3 homolog (Equine herpesvirus 1 (strain Ab4p) (EHV-1)).